Here is a 291-residue protein sequence, read N- to C-terminus: Small ribosomal subunit biogenesis GTPase RsgA (291 aa).

The CP-type G domain maps to glutamate 63–leucine 221. Residues threonine 112–aspartate 115 and glycine 164–threonine 172 contribute to the GTP site. Zn(2+)-binding residues include cysteine 245, cysteine 250, histidine 252, and cysteine 258.

Belongs to the TRAFAC class YlqF/YawG GTPase family. RsgA subfamily. Monomer. Associates with 30S ribosomal subunit, binds 16S rRNA. The cofactor is Zn(2+).

It is found in the cytoplasm. Its function is as follows. One of several proteins that assist in the late maturation steps of the functional core of the 30S ribosomal subunit. Helps release RbfA from mature subunits. May play a role in the assembly of ribosomal proteins into the subunit. Circularly permuted GTPase that catalyzes slow GTP hydrolysis, GTPase activity is stimulated by the 30S ribosomal subunit. This Staphylococcus aureus (strain COL) protein is Small ribosomal subunit biogenesis GTPase RsgA.